Consider the following 255-residue polypeptide: Small ribosomal subunit protein eS1 (255 aa).

At alanine 2 the chain carries N-acetylalanine; partial.

It belongs to the eukaryotic ribosomal protein eS1 family. Component of the small ribosomal subunit. Mature ribosomes consist of a small (40S) and a large (60S) subunit. The 40S subunit contains about 33 different proteins and 1 molecule of RNA (18S). The 60S subunit contains about 49 different proteins and 3 molecules of RNA (25S, 5.8S and 5S).

It is found in the cytoplasm. The protein is Small ribosomal subunit protein eS1 of Yarrowia lipolytica (strain CLIB 122 / E 150) (Yeast).